Reading from the N-terminus, the 78-residue chain is D-alanyl carrier protein (78 aa).

In terms of domain architecture, Carrier spans 1–78; the sequence is MNIQETVLNI…QIIQQVEALQ (78 aa). An O-(pantetheine 4'-phosphoryl)serine modification is found at Ser36.

The protein belongs to the DltC family. 4'-phosphopantetheine is transferred from CoA to a specific serine of apo-DCP.

It is found in the cytoplasm. It participates in cell wall biogenesis; lipoteichoic acid biosynthesis. Its function is as follows. Carrier protein involved in the D-alanylation of lipoteichoic acid (LTA). The loading of thioester-linked D-alanine onto DltC is catalyzed by D-alanine--D-alanyl carrier protein ligase DltA. The DltC-carried D-alanyl group is further transferred to cell membrane phosphatidylglycerol (PG) by forming an ester bond, probably catalyzed by DltD. D-alanylation of LTA plays an important role in modulating the properties of the cell wall in Gram-positive bacteria, influencing the net charge of the cell wall. The sequence is that of D-alanyl carrier protein from Enterococcus faecalis (strain ATCC 700802 / V583).